The chain runs to 561 residues: Arginine--tRNA ligase (561 aa).

The 'HIGH' region signature appears at 129–139; the sequence is ANPTGPLHVGH.

Belongs to the class-I aminoacyl-tRNA synthetase family. As to quaternary structure, monomer.

It localises to the cytoplasm. The enzyme catalyses tRNA(Arg) + L-arginine + ATP = L-arginyl-tRNA(Arg) + AMP + diphosphate. This Bordetella avium (strain 197N) protein is Arginine--tRNA ligase.